Reading from the N-terminus, the 289-residue chain is Ribosomal protein L11 methyltransferase (289 aa).

Residues Thr142, Gly163, Asp185, and Asn226 each contribute to the S-adenosyl-L-methionine site.

It belongs to the methyltransferase superfamily. PrmA family.

The protein localises to the cytoplasm. It carries out the reaction L-lysyl-[protein] + 3 S-adenosyl-L-methionine = N(6),N(6),N(6)-trimethyl-L-lysyl-[protein] + 3 S-adenosyl-L-homocysteine + 3 H(+). In terms of biological role, methylates ribosomal protein L11. The sequence is that of Ribosomal protein L11 methyltransferase from Legionella pneumophila (strain Lens).